The sequence spans 346 residues: Putative D-alanine--D-lactate ligase (346 aa).

The 202-residue stretch at 137-338 (YVVARSAGIA…LSEVIDRTLS (202 aa)) folds into the ATP-grasp domain. 163–216 (RLTYPVFVKPARSGSSFGVSKVCRPEDLATAVESARRYDTKVLIEAAVVGSEVG) contributes to the ATP binding site. 3 residues coordinate Mg(2+): Asp292, Glu305, and Asn307.

This sequence belongs to the D-alanine--D-alanine ligase family. Mg(2+) serves as cofactor. Mn(2+) is required as a cofactor.

It is found in the cell membrane. Functionally, required for resistance to glycopeptides antibiotics. D-Ala--D-Ala ligase of altered specificity which catalyzes ester bond formation between D-Ala and various D-hydroxy acids; producing a peptidoglycan which does not terminate by D-alanine but by D-lactate, thus preventing vancomycin binding. The sequence is that of Putative D-alanine--D-lactate ligase from Streptomyces coelicolor (strain ATCC BAA-471 / A3(2) / M145).